Consider the following 236-residue polypeptide: tRNA (guanine-N(7)-)-methyltransferase (236 aa).

Positions 43, 68, 102, and 125 each coordinate S-adenosyl-L-methionine. Substrate contacts are provided by K129 and D161.

Belongs to the class I-like SAM-binding methyltransferase superfamily. TrmB family.

The enzyme catalyses guanosine(46) in tRNA + S-adenosyl-L-methionine = N(7)-methylguanosine(46) in tRNA + S-adenosyl-L-homocysteine. Its pathway is tRNA modification; N(7)-methylguanine-tRNA biosynthesis. Catalyzes the formation of N(7)-methylguanine at position 46 (m7G46) in tRNA. This is tRNA (guanine-N(7)-)-methyltransferase from Ruminiclostridium cellulolyticum (strain ATCC 35319 / DSM 5812 / JCM 6584 / H10) (Clostridium cellulolyticum).